We begin with the raw amino-acid sequence, 417 residues long: MQMYFYNLVKDTDPEIAEAIKNELKRQQNKIELIASENFVSIAVMAAMGSPLTNKYAEGYPNKRYYGGCEYIDVVESIAIERAKKLFGAEHANVQPHSGAQANMAVYFAVLNPGDTILGMNLSHGGHLTHGSPVNFSGKLYNIVSYGVDPETETIDYDEVLRLAKEHRPKLILAGASAYPRIIDFKKFREIADEVGAYLMVDMAHIAGLVAAGLHPSPVEYADFVTTTTHKTLRGPRGGLILCKEKYAKLIDKSIFPGIQGGPLEHVIAAKAVALKEAMTEEFRNYQIQILKNAKALSERLIERGFRLVSGGTDNHLMLVDLRNKGITGKDAEKRLDSLNITCNKNAIPFDTQSPMVTSGIRLGTPAVTTRGFKEEDMIEVADIIHDALTNSDTDDNILQRVKALCEKYPLYSEFRE.

(6S)-5,6,7,8-tetrahydrofolate contacts are provided by residues Leu-122 and 126 to 128 (GHL). Lys-231 carries the post-translational modification N6-(pyridoxal phosphate)lysine.

It belongs to the SHMT family. As to quaternary structure, homodimer. It depends on pyridoxal 5'-phosphate as a cofactor.

Its subcellular location is the cytoplasm. It carries out the reaction (6R)-5,10-methylene-5,6,7,8-tetrahydrofolate + glycine + H2O = (6S)-5,6,7,8-tetrahydrofolate + L-serine. The protein operates within one-carbon metabolism; tetrahydrofolate interconversion. Its pathway is amino-acid biosynthesis; glycine biosynthesis; glycine from L-serine: step 1/1. In terms of biological role, catalyzes the reversible interconversion of serine and glycine with tetrahydrofolate (THF) serving as the one-carbon carrier. This reaction serves as the major source of one-carbon groups required for the biosynthesis of purines, thymidylate, methionine, and other important biomolecules. Also exhibits THF-independent aldolase activity toward beta-hydroxyamino acids, producing glycine and aldehydes, via a retro-aldol mechanism. The polypeptide is Serine hydroxymethyltransferase (Caldicellulosiruptor saccharolyticus (strain ATCC 43494 / DSM 8903 / Tp8T 6331)).